A 232-amino-acid polypeptide reads, in one-letter code: Octanoyltransferase (232 aa).

In terms of domain architecture, BPL/LPL catalytic spans 33–216; it reads GRAQDTVILL…HLVRALSNGS (184 aa). Substrate contacts are provided by residues 71–78, 146–148, and 159–161; these read RGGRITWH, AIG, and GFA. Cys-177 acts as the Acyl-thioester intermediate in catalysis.

This sequence belongs to the LipB family.

It localises to the cytoplasm. It carries out the reaction octanoyl-[ACP] + L-lysyl-[protein] = N(6)-octanoyl-L-lysyl-[protein] + holo-[ACP] + H(+). The protein operates within protein modification; protein lipoylation via endogenous pathway; protein N(6)-(lipoyl)lysine from octanoyl-[acyl-carrier-protein]: step 1/2. Functionally, catalyzes the transfer of endogenously produced octanoic acid from octanoyl-acyl-carrier-protein onto the lipoyl domains of lipoate-dependent enzymes. Lipoyl-ACP can also act as a substrate although octanoyl-ACP is likely to be the physiological substrate. This is Octanoyltransferase from Clavibacter sepedonicus (Clavibacter michiganensis subsp. sepedonicus).